The following is a 113-amino-acid chain: ATP-dependent Clp protease adapter protein ClpS (113 aa).

It belongs to the ClpS family. In terms of assembly, binds to the N-terminal domain of the chaperone ClpA.

Functionally, involved in the modulation of the specificity of the ClpAP-mediated ATP-dependent protein degradation. The sequence is that of ATP-dependent Clp protease adapter protein ClpS from Corynebacterium diphtheriae (strain ATCC 700971 / NCTC 13129 / Biotype gravis).